A 313-amino-acid chain; its full sequence is MTQEFAHLSVLLTETVAGLNIKPEGIYIDGTFGRGGHSREVLKQLGPNGRLIAIDRDPQAIAAAEQFADDARFSIVHGGFGQLAQYVDDLGLRGKIDGILFDFGVSSPQLDDAERGFSFLRDGPLDMRMDNSQGETAAEWLARAEIEDMAWVFKTYGEEKNARHIARCIAADRDKTPFLRTKELADLIARVSKSKERNKHPATRVFQAIRIYINSELEQIDQALEGAVTVLAPQGRLSVISFHSLEDRMVKRFIRRHSQGESVPHGLPLTEAEINKTRLLKAVGKAIKPSAEEIDRNARARSSVLRVAERLDY.

Residues 35–37 (GGH), Asp-55, Phe-80, Asp-102, and Gln-109 each bind S-adenosyl-L-methionine.

This sequence belongs to the methyltransferase superfamily. RsmH family.

Its subcellular location is the cytoplasm. The catalysed reaction is cytidine(1402) in 16S rRNA + S-adenosyl-L-methionine = N(4)-methylcytidine(1402) in 16S rRNA + S-adenosyl-L-homocysteine + H(+). Specifically methylates the N4 position of cytidine in position 1402 (C1402) of 16S rRNA. This is Ribosomal RNA small subunit methyltransferase H from Shewanella loihica (strain ATCC BAA-1088 / PV-4).